A 349-amino-acid polypeptide reads, in one-letter code: tRNA pseudouridine synthase D (349 aa).

Aspartate 77 serves as the catalytic Nucleophile. The 159-residue stretch at 151 to 309 folds into the TRUD domain; it reads GVPNYFGEQR…ETIDESTLKL (159 aa).

This sequence belongs to the pseudouridine synthase TruD family.

The catalysed reaction is uridine(13) in tRNA = pseudouridine(13) in tRNA. Its function is as follows. Responsible for synthesis of pseudouridine from uracil-13 in transfer RNAs. This chain is tRNA pseudouridine synthase D, found in Pseudoalteromonas translucida (strain TAC 125).